An 894-amino-acid chain; its full sequence is Sorting nexin-14 (894 aa).

Residues 78–252 enclose the PXA domain; that stretch reads SSKVDASLSE…LLIIFIDDSP (175 aa). The region spanning 284 to 416 is the RGS domain; that stretch reads ELKQIREQQD…CHSDEYFRQL (133 aa). S496 is subject to Phosphoserine. A PX domain is found at 518–638; sequence PYVDFFEDPS…DFLSPNGGET (121 aa).

It belongs to the sorting nexin family.

The protein localises to the cytoplasm. The protein resides in the cell projection. Its subcellular location is the dendrite. Plays a role in maintaining normal neuronal excitability and synaptic transmission. May be involved in several stages of intracellular trafficking. This Pongo abelii (Sumatran orangutan) protein is Sorting nexin-14 (SNX14).